The sequence spans 569 residues: Urease subunit alpha (569 aa).

The Urease domain maps to 131–569 (GGIDTHIHFI…LPMAQRYFLL (439 aa)). Residues His-136, His-138, and Lys-219 each contribute to the Ni(2+) site. Lys-219 is modified (N6-carboxylysine). Residue His-221 participates in substrate binding. Positions 248 and 274 each coordinate Ni(2+). His-322 serves as the catalytic Proton donor. Asp-362 contacts Ni(2+).

This sequence belongs to the metallo-dependent hydrolases superfamily. Urease alpha subunit family. As to quaternary structure, heterotrimer of UreA (gamma), UreB (beta) and UreC (alpha) subunits. Three heterotrimers associate to form the active enzyme. Requires Ni cation as cofactor. Carboxylation allows a single lysine to coordinate two nickel ions.

It is found in the cytoplasm. It catalyses the reaction urea + 2 H2O + H(+) = hydrogencarbonate + 2 NH4(+). Its pathway is nitrogen metabolism; urea degradation; CO(2) and NH(3) from urea (urease route): step 1/1. This Synechococcus sp. (strain RCC307) protein is Urease subunit alpha.